The sequence spans 147 residues: Deoxyuridine 5'-triphosphate nucleotidohydrolase (147 aa).

Residues 67–69 (RSG), N80, and 84–86 (LID) each bind substrate.

Belongs to the dUTPase family. Mg(2+) serves as cofactor.

The catalysed reaction is dUTP + H2O = dUMP + diphosphate + H(+). The protein operates within pyrimidine metabolism; dUMP biosynthesis; dUMP from dCTP (dUTP route): step 2/2. This enzyme is involved in nucleotide metabolism: it produces dUMP, the immediate precursor of thymidine nucleotides and it decreases the intracellular concentration of dUTP so that uracil cannot be incorporated into DNA. The sequence is that of Deoxyuridine 5'-triphosphate nucleotidohydrolase from Dictyoglomus turgidum (strain DSM 6724 / Z-1310).